The primary structure comprises 421 residues: Gamma-glutamyl phosphate reductase (421 aa).

The protein belongs to the gamma-glutamyl phosphate reductase family.

The protein resides in the cytoplasm. It carries out the reaction L-glutamate 5-semialdehyde + phosphate + NADP(+) = L-glutamyl 5-phosphate + NADPH + H(+). The protein operates within amino-acid biosynthesis; L-proline biosynthesis; L-glutamate 5-semialdehyde from L-glutamate: step 2/2. In terms of biological role, catalyzes the NADPH-dependent reduction of L-glutamate 5-phosphate into L-glutamate 5-semialdehyde and phosphate. The product spontaneously undergoes cyclization to form 1-pyrroline-5-carboxylate. This chain is Gamma-glutamyl phosphate reductase, found in Dinoroseobacter shibae (strain DSM 16493 / NCIMB 14021 / DFL 12).